The following is a 475-amino-acid chain: Chromosomal replication initiator protein DnaA (475 aa).

Residues 1-73 (MSDIEQERWS…LACWQAELPD (73 aa)) form a domain I, interacts with DnaA modulators region. The tract at residues 73 to 131 (DVHRIDLMVRSAMRCAAPAKEAPAADPRRPEHGDGRASTELKMVATAPASANHDALGGS) is domain II. Residues 132 to 354 (PLDPRLTFAS…GAINRLLAHS (223 aa)) form a domain III, AAA+ region region. Positions 179, 181, 182, and 183 each coordinate ATP. Residues 355 to 475 (KLNAQPVTLE…VELLKRQLQE (121 aa)) are domain IV, binds dsDNA.

The protein belongs to the DnaA family. Oligomerizes as a right-handed, spiral filament on DNA at oriC.

It is found in the cytoplasm. Plays an essential role in the initiation and regulation of chromosomal replication. ATP-DnaA binds to the origin of replication (oriC) to initiate formation of the DNA replication initiation complex once per cell cycle. Binds the DnaA box (a 9 base pair repeat at the origin) and separates the double-stranded (ds)DNA. Forms a right-handed helical filament on oriC DNA; dsDNA binds to the exterior of the filament while single-stranded (ss)DNA is stabiized in the filament's interior. The ATP-DnaA-oriC complex binds and stabilizes one strand of the AT-rich DNA unwinding element (DUE), permitting loading of DNA polymerase. After initiation quickly degrades to an ADP-DnaA complex that is not apt for DNA replication. Binds acidic phospholipids. The chain is Chromosomal replication initiator protein DnaA from Nitrobacter hamburgensis (strain DSM 10229 / NCIMB 13809 / X14).